Consider the following 287-residue polypeptide: Phosphatidylserine decarboxylase proenzyme (287 aa).

Active-site charge relay system; for autoendoproteolytic cleavage activity residues include Asp90, His147, and Ser253. Ser253 functions as the Schiff-base intermediate with substrate; via pyruvic acid; for decarboxylase activity in the catalytic mechanism. Ser253 is subject to Pyruvic acid (Ser); by autocatalysis.

The protein belongs to the phosphatidylserine decarboxylase family. PSD-B subfamily. Prokaryotic type I sub-subfamily. As to quaternary structure, heterodimer of a large membrane-associated beta subunit and a small pyruvoyl-containing alpha subunit. Pyruvate serves as cofactor. In terms of processing, is synthesized initially as an inactive proenzyme. Formation of the active enzyme involves a self-maturation process in which the active site pyruvoyl group is generated from an internal serine residue via an autocatalytic post-translational modification. Two non-identical subunits are generated from the proenzyme in this reaction, and the pyruvate is formed at the N-terminus of the alpha chain, which is derived from the carboxyl end of the proenzyme. The autoendoproteolytic cleavage occurs by a canonical serine protease mechanism, in which the side chain hydroxyl group of the serine supplies its oxygen atom to form the C-terminus of the beta chain, while the remainder of the serine residue undergoes an oxidative deamination to produce ammonia and the pyruvoyl prosthetic group on the alpha chain. During this reaction, the Ser that is part of the protease active site of the proenzyme becomes the pyruvoyl prosthetic group, which constitutes an essential element of the active site of the mature decarboxylase.

Its subcellular location is the cell membrane. It carries out the reaction a 1,2-diacyl-sn-glycero-3-phospho-L-serine + H(+) = a 1,2-diacyl-sn-glycero-3-phosphoethanolamine + CO2. Its pathway is phospholipid metabolism; phosphatidylethanolamine biosynthesis; phosphatidylethanolamine from CDP-diacylglycerol: step 2/2. Catalyzes the formation of phosphatidylethanolamine (PtdEtn) from phosphatidylserine (PtdSer). The sequence is that of Phosphatidylserine decarboxylase proenzyme from Aliivibrio fischeri (strain ATCC 700601 / ES114) (Vibrio fischeri).